A 172-amino-acid polypeptide reads, in one-letter code: uncharacterized protein (172 aa).

The signal sequence occupies residues 1–29 (MKKKQVMLALTAAAGLGLTALHSAPAAKA). SH3b domains follow at residues 42-105 (SDTY…MKTA) and 112-172 (KQTA…LQMR).

This is an uncharacterized protein from Bacillus subtilis (strain 168).